Reading from the N-terminus, the 378-residue chain is Cytochrome b (378 aa).

Helical transmembrane passes span 34–54 (FGSL…FLAM), 78–99 (WLLR…YLHV), 114–134 (WLIG…GYVL), and 179–199 (FFTF…IHLL). Residues H84 and H98 each coordinate heme b. Positions 183 and 197 each coordinate heme b. A ubiquinone is bound at residue H202. The next 4 helical transmembrane spans lie at 227–247 (FKDI…VLIS), 289–309 (LGGV…PFYN), 321–341 (INQV…WIGA), and 348–368 (YVLI…VNPL).

It belongs to the cytochrome b family. In terms of assembly, the main subunits of complex b-c1 are: cytochrome b, cytochrome c1 and the Rieske protein. Heme b is required as a cofactor.

It is found in the mitochondrion inner membrane. In terms of biological role, component of the ubiquinol-cytochrome c reductase complex (complex III or cytochrome b-c1 complex) that is part of the mitochondrial respiratory chain. The b-c1 complex mediates electron transfer from ubiquinol to cytochrome c. Contributes to the generation of a proton gradient across the mitochondrial membrane that is then used for ATP synthesis. The protein is Cytochrome b (mt:Cyt-b) of Drosophila mauritiana (Fruit fly).